Here is a 1064-residue protein sequence, read N- to C-terminus: MDDKASVGKISVSSDSVSTLNSEDFVLVSRQGDETPSTNNGSDDEKTGLKIVGNGSEQQLQKELADVLMDPPMDDQPGERSQLDGEGDGPLSNQLSASSTINPVPLVGLPKPEMSLPVKPGQGDSEVSSPFTPVADEDSVVFNKLTYLGCASVNAPRSEVEALRMMSILRSQCQISLDVTLSVPNVSEGTVRLLDPQTNTEIANYPIYKILFCVRGHDGTPESDCFAFTESHYNAELFRIHVFRCEIQEAVSRILYSFATAFRRSAKQTPLSATAAPQTPDSDIFTFSVSLEIKEDDGKGYFSAVPKDKDRQCFKLRQGIDKKIVICVQQTANKELAIERCFGLLLSPGKDVRNSDMHLLDLESMGKSSDGKSYVITGSWNPKSPHFQVVNEETPKDKVLFMTTAVDLVITEVQEPVRFLLETKVRVCSPNERLFWPFSKRSTTENFFLKLKQIKQKEKKNNADTLYEVVCLESESERERRKTTASPSVRLPQSGSQSSMIPSPPEDDEEEDNDEPLLSGFGDVSKECAEKILETWGELLSKWHLNLSVRPKQLSSLVRSGVPEALRGEVWQLLAGCHNNDHLVEKYRILITKESPQDSAITRDINRTFPAHDYFKDTGGDGQDSLYKICKAYSVYDEEIGYCQGQSFLAAVLLLHMPEEQAFSVLVKIMFDYGLRELFKQNFEDLHCKFYQLERLMQEYIPDLYNHFLDISLEAHMYASQWFLTLFTAKFPLYMVFHIIDLLLCEGISVIFNVALGLLKTSKDDLLLTDFEGALKFFRVQLPKRYRSEENAKRLMELACNTKISQKKLKKFEKEYHTMREQQAQQEDPIERFERENRRLQEANMRLEQENDDLAHELVTSKIALRKDLDNAEEKADALNKELLMTKQKLIDAEDEKRRLEEESAQLKEMCRRELDKAESEIKKNSSIIGDYKQICSQLSERLEKQQTANKVEIEKIRQKVDDCDRCRDFFNKEGRVKGISSAKGVSDEDTDEEKETLKNQLREMELELAQTKLQLVEAECKIQDLEHHLGLALSEVQAAKKTWFNRTLSSIKTATGVQGKETC.

Residues 1–101 (MDDKASVGKI…SNQLSASSTI (101 aa)) are disordered. A compositionally biased stretch (low complexity) spans 7–22 (VGKISVSSDSVSTLNS). Ser42 bears the Phosphoserine mark. The segment covering 91 to 101 (LSNQLSASSTI) has biased composition (polar residues). One can recognise a PID domain in the interval 137–293 (EDSVVFNKLT…IFTFSVSLEI (157 aa)). Position 355 is a phosphoserine (Ser355). A disordered region spans residues 478-520 (RERRKTTASPSVRLPQSGSQSSMIPSPPEDDEEEDNDEPLLSG). The span at 484-501 (TASPSVRLPQSGSQSSMI) shows a compositional bias: polar residues. The span at 505–515 (PEDDEEEDNDE) shows a compositional bias: acidic residues. Positions 561–747 (GVPEALRGEV…HIIDLLLCEG (187 aa)) constitute a Rab-GAP TBC domain. Residues 805–1038 (SQKKLKKFEK…HLGLALSEVQ (234 aa)) are a coiled coil. Thr991 carries the post-translational modification Phosphothreonine.

As to quaternary structure, interacts with RAB6A and tubulin gamma.

The protein localises to the cytoplasm. It is found in the cytosol. Its subcellular location is the cytoskeleton. It localises to the microtubule organizing center. The protein resides in the centrosome. Functionally, may act as a GTPase-activating protein of RAB6A. May play a role in microtubule nucleation by centrosome. May participate in a RAB6A-mediated pathway involved in the metaphase-anaphase transition. In Mus musculus (Mouse), this protein is Rab GTPase-activating protein 1.